The following is an 89-amino-acid chain: Small ribosomal subunit protein uS15 (89 aa).

Belongs to the universal ribosomal protein uS15 family. Part of the 30S ribosomal subunit. Forms a bridge to the 50S subunit in the 70S ribosome, contacting the 23S rRNA.

Its function is as follows. One of the primary rRNA binding proteins, it binds directly to 16S rRNA where it helps nucleate assembly of the platform of the 30S subunit by binding and bridging several RNA helices of the 16S rRNA. In terms of biological role, forms an intersubunit bridge (bridge B4) with the 23S rRNA of the 50S subunit in the ribosome. This Serratia proteamaculans (strain 568) protein is Small ribosomal subunit protein uS15.